We begin with the raw amino-acid sequence, 282 residues long: Malonyl-[acyl-carrier protein] O-methyltransferase 1 (282 aa).

This sequence belongs to the methyltransferase superfamily.

The enzyme catalyses malonyl-[ACP] + S-adenosyl-L-methionine = malonyl-[ACP] methyl ester + S-adenosyl-L-homocysteine. It functions in the pathway cofactor biosynthesis; biotin biosynthesis. Converts the free carboxyl group of a malonyl-thioester to its methyl ester by transfer of a methyl group from S-adenosyl-L-methionine (SAM). It allows to synthesize pimeloyl-ACP via the fatty acid synthetic pathway. The protein is Malonyl-[acyl-carrier protein] O-methyltransferase 1 of Coxiella burnetii (strain RSA 493 / Nine Mile phase I).